Here is a 393-residue protein sequence, read N- to C-terminus: S-adenosylmethionine synthase (393 aa).

An ATP-binding site is contributed by H17. Mg(2+) is bound at residue D19. Position 45 (E45) interacts with K(+). L-methionine is bound by residues E58 and Q106. The segment at 106–116 is flexible loop; that stretch reads QSAHIAQGVDA. ATP-binding positions include 171-173, 237-238, D246, 252-253, A269, and K273; these read DAK, KF, and RK. D246 contributes to the L-methionine binding site. Position 277 (K277) interacts with L-methionine.

Belongs to the AdoMet synthase family. In terms of assembly, homotetramer; dimer of dimers. Requires Mg(2+) as cofactor. K(+) serves as cofactor.

Its subcellular location is the cytoplasm. It catalyses the reaction L-methionine + ATP + H2O = S-adenosyl-L-methionine + phosphate + diphosphate. Its pathway is amino-acid biosynthesis; S-adenosyl-L-methionine biosynthesis; S-adenosyl-L-methionine from L-methionine: step 1/1. In terms of biological role, catalyzes the formation of S-adenosylmethionine (AdoMet) from methionine and ATP. The overall synthetic reaction is composed of two sequential steps, AdoMet formation and the subsequent tripolyphosphate hydrolysis which occurs prior to release of AdoMet from the enzyme. This Jannaschia sp. (strain CCS1) protein is S-adenosylmethionine synthase.